Here is a 264-residue protein sequence, read N- to C-terminus: Glutamate racemase (264 aa).

Substrate-binding positions include 10–11 (DS) and 42–43 (YG). Cys-73 serves as the catalytic Proton donor/acceptor. Residue 74 to 75 (NT) coordinates substrate. Catalysis depends on Cys-183, which acts as the Proton donor/acceptor. 184–185 (TH) contributes to the substrate binding site.

Belongs to the aspartate/glutamate racemases family. In terms of assembly, homodimer.

The enzyme catalyses L-glutamate = D-glutamate. The protein operates within cell wall biogenesis; peptidoglycan biosynthesis. Its function is as follows. Provides the (R)-glutamate required for cell wall biosynthesis. This chain is Glutamate racemase, found in Streptococcus pyogenes serotype M1.